We begin with the raw amino-acid sequence, 296 residues long: Nucleotide-binding protein SAG0531 (296 aa).

ATP is bound at residue 13–20; that stretch reads GMSGAGKT. 63 to 66 serves as a coordination point for GTP; sequence DMRS.

This sequence belongs to the RapZ-like family.

Functionally, displays ATPase and GTPase activities. The protein is Nucleotide-binding protein SAG0531 of Streptococcus agalactiae serotype V (strain ATCC BAA-611 / 2603 V/R).